The following is a 114-amino-acid chain: Beta-microseminoprotein (114 aa).

Positions 1-20 are cleaved as a signal peptide; the sequence is MNVLLGGFVIFATFVTLCNA. Cystine bridges form between C22–C70, C38–C62, C57–C93, C60–C69, and C84–C107.

The protein belongs to the beta-microseminoprotein family. In terms of assembly, homodimer; Interacts with PI16.

It is found in the secreted. The sequence is that of Beta-microseminoprotein (MSMB) from Papio anubis (Olive baboon).